Reading from the N-terminus, the 560-residue chain is MFS-type transporter pgmG (560 aa).

Residues 1 to 32 (MSETVTQTETDQRPATARSLGAEEKEAKSDEQ) form a disordered region. The span at 21–31 (GAEEKEAKSDE) shows a compositional bias: basic and acidic residues. 8 helical membrane-spanning segments follow: residues 45–65 (FIVIISILSSVTLYSLDNTIV), 84–104 (WLSVAFLVACVATNSIWSKIY), 111–131 (WLYLFCVVLFEVGSAMCGAAP), 141–161 (ALAGLGGAGLYVGVMTLLSVN), 174–194 (TGLTWGVGTVLGPIVGGGFAV), 201–221 (WSFYINLFFAAVAIPIYLFML), 242–262 (LGTILMIGACVSGVMAINFGG), and 275–295 (CFVVSGVLFIVFGLQQWYCIG). Asn-300 carries an N-linked (GlcNAc...) asparagine glycan. The helical transmembrane segment at 313 to 333 (FIILFVQTASVATVFFVPIYF) threads the bilayer. Asn-343 carries N-linked (GlcNAc...) asparagine glycosylation. Transmembrane regions (helical) follow at residues 346–366 (AIDAGVRLLPLVCFIVAAMIL), 378–398 (MPWYLVGGCLSLVGSVLMYTI), 409–429 (GYMIILGVGGGMYAQASFAVA), 440–460 (VATGFISLAQLTGGTIALAIA), and 515–535 (ISQVYILPITGAAMSISLAIF).

It belongs to the major facilitator superfamily. TCR/Tet family.

It is found in the membrane. MFS-type transporter; part of the gene cluster that mediates the biosynthesis of pleosporalin A, ascomycone A, as well as a third cryptic naphthoquinone derived pigment, all responsible for the coloration of conidia. Seems not to be involved in pigment biosynthesis although its expression is regulated by the cluster-specific transcription factor pgmR. This chain is MFS-type transporter pgmG, found in Aspergillus terreus.